Consider the following 153-residue polypeptide: Superoxide dismutase [Cu-Zn] (153 aa).

Residues His45 and His47 each coordinate Cu cation. Thr53 carries the phosphothreonine modification. Cys56 and Cys145 are joined by a disulfide. Ser59 is modified (phosphoserine). His62 is a Cu cation binding site. His62, His70, His79, and Asp82 together coordinate Zn(2+). A Cu cation-binding site is contributed by His119.

It belongs to the Cu-Zn superoxide dismutase family. As to quaternary structure, homodimer. It depends on Cu cation as a cofactor. Requires Zn(2+) as cofactor.

The protein resides in the cytoplasm. It carries out the reaction 2 superoxide + 2 H(+) = H2O2 + O2. Functionally, destroys radicals which are normally produced within the cells and which are toxic to biological systems. This is Superoxide dismutase [Cu-Zn] from Drosophila melanogaster (Fruit fly).